The following is an 814-amino-acid chain: Valine--tRNA ligase (814 aa).

Residues 46-56 (PTVSGQLHIGH) carry the 'HIGH' region motif. Residues 536–540 (KMSKS) carry the 'KMSKS' region motif. Lysine 539 is a binding site for ATP.

It belongs to the class-I aminoacyl-tRNA synthetase family. ValS type 2 subfamily. As to quaternary structure, monomer.

It is found in the cytoplasm. It catalyses the reaction tRNA(Val) + L-valine + ATP = L-valyl-tRNA(Val) + AMP + diphosphate. In terms of biological role, catalyzes the attachment of valine to tRNA(Val). As ValRS can inadvertently accommodate and process structurally similar amino acids such as threonine, to avoid such errors, it has a 'posttransfer' editing activity that hydrolyzes mischarged Thr-tRNA(Val) in a tRNA-dependent manner. The sequence is that of Valine--tRNA ligase from Rickettsia typhi (strain ATCC VR-144 / Wilmington).